A 121-amino-acid chain; its full sequence is Large ribosomal subunit protein bL12 (121 aa).

The protein belongs to the bacterial ribosomal protein bL12 family. Homodimer. Part of the ribosomal stalk of the 50S ribosomal subunit. Forms a multimeric L10(L12)X complex, where L10 forms an elongated spine to which 2 to 4 L12 dimers bind in a sequential fashion. Binds GTP-bound translation factors.

Its function is as follows. Forms part of the ribosomal stalk which helps the ribosome interact with GTP-bound translation factors. Is thus essential for accurate translation. The sequence is that of Large ribosomal subunit protein bL12 from Pseudomonas savastanoi pv. phaseolicola (strain 1448A / Race 6) (Pseudomonas syringae pv. phaseolicola (strain 1448A / Race 6)).